Reading from the N-terminus, the 839-residue chain is Probable beta-glucosidase I (839 aa).

N-linked (GlcNAc...) asparagine glycosylation is present at asparagine 197. Aspartate 225 is a catalytic residue. In terms of domain architecture, PA14 spans 396 to 556 (DGKTGFKFRV…TQEELISKAV (161 aa)). Asparagine 494 carries an N-linked (GlcNAc...) asparagine glycan.

It belongs to the glycosyl hydrolase 3 family.

Its subcellular location is the secreted. The catalysed reaction is Hydrolysis of terminal, non-reducing beta-D-glucosyl residues with release of beta-D-glucose.. Its pathway is glycan metabolism; cellulose degradation. Beta-glucosidases are one of a number of cellulolytic enzymes, and catalyze the last step releasing glucose from the inhibitory cellobiose. The sequence is that of Probable beta-glucosidase I (bglI) from Emericella nidulans (strain FGSC A4 / ATCC 38163 / CBS 112.46 / NRRL 194 / M139) (Aspergillus nidulans).